A 131-amino-acid polypeptide reads, in one-letter code: Small ribosomal subunit protein uS11 (131 aa).

The protein belongs to the universal ribosomal protein uS11 family. Part of the 30S ribosomal subunit. Interacts with proteins S7 and S18. Binds to IF-3.

Located on the platform of the 30S subunit, it bridges several disparate RNA helices of the 16S rRNA. Forms part of the Shine-Dalgarno cleft in the 70S ribosome. The chain is Small ribosomal subunit protein uS11 from Paramagnetospirillum magneticum (strain ATCC 700264 / AMB-1) (Magnetospirillum magneticum).